A 474-amino-acid chain; its full sequence is UDP-N-acetylmuramate--L-alanine ligase (474 aa).

Position 108-114 (glycine 108–threonine 114) interacts with ATP.

This sequence belongs to the MurCDEF family.

Its subcellular location is the cytoplasm. It carries out the reaction UDP-N-acetyl-alpha-D-muramate + L-alanine + ATP = UDP-N-acetyl-alpha-D-muramoyl-L-alanine + ADP + phosphate + H(+). Its pathway is cell wall biogenesis; peptidoglycan biosynthesis. Its function is as follows. Cell wall formation. The protein is UDP-N-acetylmuramate--L-alanine ligase of Chloroflexus aggregans (strain MD-66 / DSM 9485).